The following is a 770-amino-acid chain: Arf-GAP with coiled-coil, ANK repeat and PH domain-containing protein 2 (770 aa).

One can recognise a BAR domain in the interval 6–226 (DFEECLKDSP…MKDLGAQLDR (221 aa)). In terms of domain architecture, PH spans 266–361 (GIVMEGYLFK…WIKAVQTSIA (96 aa)). Positions 371-392 (SEKLDKKSSPSTGSLDSGSESK) are disordered. Over residues 379-388 (SPSTGSLDSG) the composition is skewed to low complexity. Residues Ser-384 and Ser-387 each carry the phosphoserine modification. The 122-residue stretch at 399-520 (ESALQRVQCI…KFVDKYSTLL (122 aa)) folds into the Arf-GAP domain. A C4-type zinc finger spans residues 414–437 (CCDCGLADPRWASINLGITLCIEC). The residue at position 521 (Ser-521) is a Phosphoserine. Over residues 548-561 (TPVKSNDSGIQQCS) the composition is skewed to polar residues. The disordered stretch occupies residues 548–571 (TPVKSNDSGIQQCSDDGRESLPST). Ser-573 and Ser-576 each carry phosphoserine. 3 ANK repeats span residues 632-661 (NQAT…NVNQ), 665-694 (QGRG…NQHA), and 698-727 (EGKD…NEEM). The residue at position 734 (Tyr-734) is a Phosphotyrosine. Ser-767 carries the phosphoserine modification.

In terms of assembly, interacts with RAB35 (GTP-bound form); the interaction is direct and probably recruits ACAP2 to membranes. Interacts with MICALL1; the interaction is indirect through RAB35.

It localises to the endosome membrane. The protein resides in the cell membrane. GAP activity stimulated by phosphatidylinositol 4,5-bisphosphate (PIP2) and phosphatidic acid. In terms of biological role, GTPase-activating protein (GAP) for ADP ribosylation factor 6 (ARF6). Doesn't show GAP activity for RAB35. This is Arf-GAP with coiled-coil, ANK repeat and PH domain-containing protein 2 (Acap2) from Rattus norvegicus (Rat).